A 200-amino-acid polypeptide reads, in one-letter code: Alpha/beta-tubulin-N-acetyltransferase 9 (200 aa).

The 148-residue stretch at 34–181 folds into the N-acetyltransferase domain; it reads ETLRELTASE…HEVTLERPIT (148 aa).

It belongs to the acetyltransferase family. GNAT subfamily. In terms of assembly, interacts with microtubules as well as alpha/beta-tubulin heterodimers.

Its subcellular location is the nucleus. It localises to the cytoplasm. It is found in the cytoskeleton. The protein resides in the spindle. The protein localises to the spindle pole. The catalysed reaction is N-terminal L-methionyl-[tubulin] + acetyl-CoA = N-terminal N(alpha)-acetyl-L-methionyl-[tubulin] + CoA + H(+). Functionally, N-acetyltransferase that mediates the acetylation of the N-terminal residues of alpha- and beta-tubulin. Required for microtubule stability and inhibition of JNK signaling to promote cell survival during development, possibly acting independently of its N-acetyltransferase activity. Necessary for the stabilization of spindle microtubules and for mitosis progression. Regulates microtubule stability by inhibiting Spastin-mediated depolymerization and promoting Eb1-mediated polymerization. This Drosophila melanogaster (Fruit fly) protein is Alpha/beta-tubulin-N-acetyltransferase 9.